Here is a 128-residue protein sequence, read N- to C-terminus: Small ribosomal subunit protein uS11 (128 aa).

This sequence belongs to the universal ribosomal protein uS11 family. In terms of assembly, part of the 30S ribosomal subunit. Interacts with proteins S7 and S18. Binds to IF-3.

Located on the platform of the 30S subunit, it bridges several disparate RNA helices of the 16S rRNA. Forms part of the Shine-Dalgarno cleft in the 70S ribosome. This chain is Small ribosomal subunit protein uS11, found in Synechococcus sp. (strain JA-2-3B'a(2-13)) (Cyanobacteria bacterium Yellowstone B-Prime).